Here is a 352-residue protein sequence, read N- to C-terminus: Nicotinate-nucleotide--dimethylbenzimidazole phosphoribosyltransferase (352 aa).

The active-site Proton acceptor is the Glu-318.

This sequence belongs to the CobT family.

The catalysed reaction is 5,6-dimethylbenzimidazole + nicotinate beta-D-ribonucleotide = alpha-ribazole 5'-phosphate + nicotinate + H(+). It functions in the pathway nucleoside biosynthesis; alpha-ribazole biosynthesis; alpha-ribazole from 5,6-dimethylbenzimidazole: step 1/2. Catalyzes the synthesis of alpha-ribazole-5'-phosphate from nicotinate mononucleotide (NAMN) and 5,6-dimethylbenzimidazole (DMB). The sequence is that of Nicotinate-nucleotide--dimethylbenzimidazole phosphoribosyltransferase from Azotobacter vinelandii (strain DJ / ATCC BAA-1303).